Consider the following 503-residue polypeptide: Glutamate--tRNA ligase (503 aa).

Positions 9–19 match the 'HIGH' region motif; sequence PSPTGDPHVGT. Positions 251-255 match the 'KMSKS' region motif; the sequence is KLSKR. Residue Lys-254 participates in ATP binding.

The protein belongs to the class-I aminoacyl-tRNA synthetase family. Glutamate--tRNA ligase type 1 subfamily. Monomer.

The protein resides in the cytoplasm. The enzyme catalyses tRNA(Glu) + L-glutamate + ATP = L-glutamyl-tRNA(Glu) + AMP + diphosphate. Functionally, catalyzes the attachment of glutamate to tRNA(Glu) in a two-step reaction: glutamate is first activated by ATP to form Glu-AMP and then transferred to the acceptor end of tRNA(Glu). This chain is Glutamate--tRNA ligase, found in Saccharophagus degradans (strain 2-40 / ATCC 43961 / DSM 17024).